The primary structure comprises 432 residues: Meiotically up-regulated gene 134 protein (432 aa).

It belongs to the UPF0300 family.

The protein localises to the cytoplasm. It is found in the cell cortex. In terms of biological role, has a role in meiosis. This is Meiotically up-regulated gene 134 protein (mug134) from Schizosaccharomyces pombe (strain 972 / ATCC 24843) (Fission yeast).